The primary structure comprises 148 residues: Vascular endothelial growth factor homolog (148 aa).

A signal peptide spans 1-25 (MKLTATLQVVVALLICMYNLPECVS). 3 cysteine pairs are disulfide-bonded: cysteine 46–cysteine 88, cysteine 77–cysteine 130, and cysteine 81–cysteine 132. Asparagine 95 is a glycosylation site (N-linked (GlcNAc...) asparagine; by host).

The protein belongs to the PDGF/VEGF growth factor family. As to quaternary structure, homodimer; disulfide-linked.

It is found in the secreted. In terms of biological role, induces endothelial proliferation. The sequence is that of Vascular endothelial growth factor homolog from Orf virus (strain NZ7) (OV NZ-7).